The chain runs to 608 residues: Phosphoenolpyruvate carboxykinase [GTP] (608 aa).

Residues R82 and 222 to 224 (YGG) each bind substrate. The Mn(2+) site is built by K231 and H251. Substrate is bound at residue S273. Residue 274–279 (ACGKTN) coordinates GTP. The active site involves C275. A Mn(2+)-binding site is contributed by D298. 389-391 (NSR) contributes to the substrate binding site. GTP contacts are provided by residues R391, R422, and 517-520 (FGDN).

It belongs to the phosphoenolpyruvate carboxykinase [GTP] family. As to quaternary structure, monomer. Mn(2+) serves as cofactor.

The protein resides in the cytoplasm. It catalyses the reaction oxaloacetate + GTP = phosphoenolpyruvate + GDP + CO2. Its pathway is carbohydrate biosynthesis; gluconeogenesis. In terms of biological role, catalyzes the conversion of oxaloacetate (OAA) to phosphoenolpyruvate (PEP), the rate-limiting step in the metabolic pathway that produces glucose from lactate and other precursors derived from the citric acid cycle. The sequence is that of Phosphoenolpyruvate carboxykinase [GTP] from Paenarthrobacter aurescens (strain TC1).